The chain runs to 279 residues: Acetylglutamate kinase (279 aa).

Substrate contacts are provided by residues Gly-64–Gly-65, Arg-86, and Asn-177.

The protein belongs to the acetylglutamate kinase family. ArgB subfamily.

The protein resides in the cytoplasm. The catalysed reaction is N-acetyl-L-glutamate + ATP = N-acetyl-L-glutamyl 5-phosphate + ADP. It functions in the pathway amino-acid biosynthesis; L-arginine biosynthesis; N(2)-acetyl-L-ornithine from L-glutamate: step 2/4. Functionally, catalyzes the ATP-dependent phosphorylation of N-acetyl-L-glutamate. This chain is Acetylglutamate kinase, found in Campylobacter jejuni subsp. jejuni serotype O:23/36 (strain 81-176).